An 888-amino-acid chain; its full sequence is Glutamate receptor 3 (888 aa).

An N-terminal signal peptide occupies residues Met-1–Gly-22. The Extracellular portion of the chain corresponds to Gly-23–Ala-546. N-linked (GlcNAc...) asparagine glycosylation is found at Asn-57, Asn-260, Asn-374, Asn-409, and Asn-416. A disulfide bridge links Cys-85 with Cys-334. Pro-502, Thr-504, and Arg-509 together coordinate L-glutamate. The helical transmembrane segment at Tyr-547–Val-567 threads the bilayer. Residues Ser-568–Glu-596 lie on the Cytoplasmic side of the membrane. An intramembrane region (helical; Pore-forming) is located at residues Phe-597–Gln-612. An intramembrane segment occupies Gln-613 to Cys-615. Cys-615 is lipidated: S-palmitoyl cysteine. Residues Asp-616–Ser-621 are Cytoplasmic-facing. The helical transmembrane segment at Leu-622–Tyr-642 threads the bilayer. Residues Thr-643–Asn-817 are Extracellular-facing. Residues Ser-680, Thr-681, and Glu-731 each coordinate L-glutamate. The cysteines at positions 744 and 799 are disulfide-linked. The helical transmembrane segment at Val-818 to Ile-838 threads the bilayer. The Cytoplasmic segment spans residues Glu-839–Ile-888. The S-palmitoyl cysteine moiety is linked to residue Cys-841. 2 positions are modified to phosphotyrosine: Tyr-871 and Tyr-881.

This sequence belongs to the glutamate-gated ion channel (TC 1.A.10.1) family. GRIA3 subfamily. In terms of assembly, homotetramer or heterotetramer of pore-forming glutamate receptor subunits. Tetramers may be formed by the dimerization of dimers. Interacts with PICK1, GRIP1 and GRIP2. Found in a complex with GRIA1, GRIA2, GRIA4, CNIH2, CNIH3, CACNG2, CACNG3, CACNG4, CACNG5, CACNG7 and CACNG8. Interacts with CACNG5. Found in a complex with GRIA1, GRIA2, GRIA4, DLG4, CACNG8 and CNIH2.

It is found in the cell membrane. Its subcellular location is the postsynaptic cell membrane. The protein localises to the postsynaptic density membrane. It carries out the reaction Ca(2+)(in) = Ca(2+)(out). Functionally, ionotropic glutamate receptor that functions as a ligand-gated cation channel, gated by L-glutamate and glutamatergic agonists such as alpha-amino-3-hydroxy-5-methyl-4-isoxazolepropionic acid (AMPA), quisqualic acid, and kainic acid. L-glutamate acts as an excitatory neurotransmitter at many synapses in the central nervous system and plays an important role in fast excitatory synaptic transmission by inducing long-term potentiation. Binding of the excitatory neurotransmitter L-glutamate induces a conformation change, leading to the opening of the cation channel, and thereby converts the chemical signal to an electrical impulse upon entry of calcium. The receptor then desensitizes rapidly and enters a transient inactive state, characterized by the presence of bound agonist. In the presence of CACNG8, shows resensitization which is characterized by a delayed accumulation of current flux upon continued application of glutamate. The chain is Glutamate receptor 3 from Rattus norvegicus (Rat).